A 183-amino-acid chain; its full sequence is Large ribosomal subunit protein uL13m (183 aa).

This sequence belongs to the universal ribosomal protein uL13 family. Component of the mitochondrial large ribosomal subunit (mt-LSU). Mature N.crassa 74S mitochondrial ribosomes consist of a small (37S) and a large (54S) subunit. The 37S small subunit contains a 16S ribosomal RNA (16S mt-rRNA) and 32 different proteins. The 54S large subunit contains a 23S rRNA (23S mt-rRNA) and 42 different proteins.

It localises to the mitochondrion. In terms of biological role, component of the mitochondrial ribosome (mitoribosome), a dedicated translation machinery responsible for the synthesis of mitochondrial genome-encoded proteins, including at least some of the essential transmembrane subunits of the mitochondrial respiratory chain. The mitoribosomes are attached to the mitochondrial inner membrane and translation products are cotranslationally integrated into the membrane. This is Large ribosomal subunit protein uL13m (mrpl23) from Neurospora crassa (strain ATCC 24698 / 74-OR23-1A / CBS 708.71 / DSM 1257 / FGSC 987).